Here is a 536-residue protein sequence, read N- to C-terminus: Apolipoprotein N-acyltransferase (536 aa).

The next 7 membrane-spanning stretches (helical) occupy residues 10–30 (IASG…LLAG), 42–62 (AWPV…GSAA), 76–96 (WWFG…AFLV), 107–127 (AAIC…FALA), 136–158 (LRIL…LLTG), 181–201 (IGIW…AVLI), and 212–232 (AVPA…GIRL). One can recognise a CN hydrolase domain in the interval 248–501 (MQPNLPQDAR…EGVLDSGLPA (254 aa)). The active-site Proton acceptor is the Glu295. The active site involves Lys360. The active-site Nucleophile is Cys413. A helical transmembrane segment spans residues 509–529 (ARVGELPAAVLVALVMMLVLL).

This sequence belongs to the CN hydrolase family. Apolipoprotein N-acyltransferase subfamily.

The protein resides in the cell inner membrane. The catalysed reaction is N-terminal S-1,2-diacyl-sn-glyceryl-L-cysteinyl-[lipoprotein] + a glycerophospholipid = N-acyl-S-1,2-diacyl-sn-glyceryl-L-cysteinyl-[lipoprotein] + a 2-acyl-sn-glycero-3-phospholipid + H(+). It functions in the pathway protein modification; lipoprotein biosynthesis (N-acyl transfer). In terms of biological role, catalyzes the phospholipid dependent N-acylation of the N-terminal cysteine of apolipoprotein, the last step in lipoprotein maturation. The polypeptide is Apolipoprotein N-acyltransferase (Rhodopseudomonas palustris (strain ATCC BAA-98 / CGA009)).